The sequence spans 238 residues: 2-C-methyl-D-erythritol 4-phosphate cytidylyltransferase (238 aa).

The protein belongs to the IspD/TarI cytidylyltransferase family. IspD subfamily.

It catalyses the reaction 2-C-methyl-D-erythritol 4-phosphate + CTP + H(+) = 4-CDP-2-C-methyl-D-erythritol + diphosphate. The protein operates within isoprenoid biosynthesis; isopentenyl diphosphate biosynthesis via DXP pathway; isopentenyl diphosphate from 1-deoxy-D-xylulose 5-phosphate: step 2/6. In terms of biological role, catalyzes the formation of 4-diphosphocytidyl-2-C-methyl-D-erythritol from CTP and 2-C-methyl-D-erythritol 4-phosphate (MEP). In Aliivibrio fischeri (strain ATCC 700601 / ES114) (Vibrio fischeri), this protein is 2-C-methyl-D-erythritol 4-phosphate cytidylyltransferase.